The primary structure comprises 255 residues: tRNA (guanine-N(1)-)-methyltransferase (255 aa).

S-adenosyl-L-methionine is bound by residues glycine 113 and 133 to 138 (IGDYVL).

The protein belongs to the RNA methyltransferase TrmD family. As to quaternary structure, homodimer.

It is found in the cytoplasm. The catalysed reaction is guanosine(37) in tRNA + S-adenosyl-L-methionine = N(1)-methylguanosine(37) in tRNA + S-adenosyl-L-homocysteine + H(+). Its function is as follows. Specifically methylates guanosine-37 in various tRNAs. The chain is tRNA (guanine-N(1)-)-methyltransferase from Mannheimia succiniciproducens (strain KCTC 0769BP / MBEL55E).